Reading from the N-terminus, the 125-residue chain is Large ribosomal subunit protein uL24 (125 aa).

Belongs to the universal ribosomal protein uL24 family. In terms of assembly, part of the 50S ribosomal subunit.

In terms of biological role, one of two assembly initiator proteins, it binds directly to the 5'-end of the 23S rRNA, where it nucleates assembly of the 50S subunit. Its function is as follows. One of the proteins that surrounds the polypeptide exit tunnel on the outside of the subunit. The sequence is that of Large ribosomal subunit protein uL24 from Mycoplasma mobile (strain ATCC 43663 / 163K / NCTC 11711) (Mesomycoplasma mobile).